We begin with the raw amino-acid sequence, 619 residues long: Coagulation factor X-activating enzyme heavy chain (619 aa).

An N-terminal signal peptide occupies residues 1–20; sequence MMQVLLVTISLAVFPYQGSS. The propeptide occupies 21-188; it reads IILESGNVND…SDKPIKKASQ (168 aa). The 195-residue stretch at 199–393 folds into the Peptidase M12B domain; the sequence is IFIELVIIVD…YKPKCIFNPP (195 aa). A disulfide bond links C215 and C251. 2 N-linked (GlcNAc...) (complex) asparagine glycosylation sites follow: N216 and N257. 3 cysteine pairs are disulfide-bonded: C308–C388, C348–C372, and C350–C355. H333 is a binding site for Zn(2+). The active site involves E334. 2 residues coordinate Zn(2+): H337 and H343. N-linked (GlcNAc...) (complex) asparagine glycosylation is found at N351 and N371. Residues 401-487 form the Disintegrin domain; sequence PPVCGNEIWE…ECPRDQLQQN (87 aa). The Ca(2+) site is built by V403, N406, I408, E410, E413, and D416. 14 disulfides stabilise this stretch: C404/C433, C415/C428, C417/C423, C427/C450, C441/C447, C446/C472, C459/C479, C466/C498, C491/C503, C510/C560, C525/C571, C538/C548, C555/C597, and C591/C603. Positions 465–467 match the D/ECD-tripeptide motif; it reads ECD. D467, V468, E470, D482, and Q483 together coordinate Ca(2+).

It belongs to the venom metalloproteinase (M12B) family. P-III subfamily. P-IIId sub-subfamily. In terms of assembly, heterotrimer; disulfide-linked. The heterotrimer consists of 1 heavy chain and 2 light chains (lectins): LC1 and LC2. It depends on Zn(2+) as a cofactor. Post-translationally, N-glycosylated; probably required for conformation. Removal of easily accessible sugars does not change its functional capacity, but removal of the core sugars with N-glycanase causes a virtually complete loss of enzyme activity, apparently as a result of major conformational changes in the molecule. Not O-glycosylated. Expressed by the venom gland.

Its subcellular location is the secreted. It carries out the reaction Specifically activates several components of the blood clotting system, including coagulation factor X, coagulation factor IX and protein C by cleavage of Arg-|-Xaa bonds. Has no action on insulin B chain.. Its function is as follows. Catalytic subunit of blood coagulation factor X-activating enzyme. Activates coagulation factor X (F10) by cleaving the Arg-Ile bond and is also able to activate coagulation factor IX (F9) and protein S (PROS1) by specific cleavage of Arg-Ile and Arg-Val bonds. The chain is Coagulation factor X-activating enzyme heavy chain from Daboia siamensis (Eastern Russel's viper).